A 107-amino-acid polypeptide reads, in one-letter code: Thioredoxin (107 aa).

Positions 2–107 (AGVLKNVTDD…ALLRPGPVPR (106 aa)) constitute a Thioredoxin domain. The cysteines at positions 33 and 36 are disulfide-linked.

This sequence belongs to the thioredoxin family.

Functionally, component of the thioredoxin-thioredoxin reductase system. Participates in various redox reactions through the reversible oxidation of its active center dithiol to a disulfide and catalyzes dithiol-disulfide exchange reactions. The protein is Thioredoxin (trxA) of Streptomyces clavuligerus.